A 101-amino-acid polypeptide reads, in one-letter code: Urease subunit beta (101 aa).

This sequence belongs to the urease beta subunit family. Heterotrimer of UreA (gamma), UreB (beta) and UreC (alpha) subunits. Three heterotrimers associate to form the active enzyme.

Its subcellular location is the cytoplasm. The enzyme catalyses urea + 2 H2O + H(+) = hydrogencarbonate + 2 NH4(+). It functions in the pathway nitrogen metabolism; urea degradation; CO(2) and NH(3) from urea (urease route): step 1/1. The protein is Urease subunit beta of Pseudomonas fluorescens (strain SBW25).